Here is a 236-residue protein sequence, read N- to C-terminus: Urease accessory protein UreF (236 aa).

Belongs to the UreF family. UreD, UreF and UreG form a complex that acts as a GTP-hydrolysis-dependent molecular chaperone, activating the urease apoprotein by helping to assemble the nickel containing metallocenter of UreC. The UreE protein probably delivers the nickel.

It localises to the cytoplasm. Its function is as follows. Required for maturation of urease via the functional incorporation of the urease nickel metallocenter. The sequence is that of Urease accessory protein UreF from Synechocystis sp. (strain ATCC 27184 / PCC 6803 / Kazusa).